The primary structure comprises 483 residues: CBL-interacting serine/threonine-protein kinase 19 (483 aa).

Residues Y28–F282 enclose the Protein kinase domain. ATP-binding positions include L34–V42 and K57. The active-site Proton acceptor is D150. Positions D168–E197 are activation loop. A Phosphoserine modification is found at S172. T186 is subject to Phosphothreonine. A compositionally biased stretch (polar residues) spans S313–S322. The interval S313–S338 is disordered. One can recognise an NAF domain in the interval P340–E364. Residues G367–V396 are PPI. The interval N459–D483 is disordered.

It belongs to the protein kinase superfamily. CAMK Ser/Thr protein kinase family. SNF1 subfamily. Mn(2+) is required as a cofactor.

The enzyme catalyses L-seryl-[protein] + ATP = O-phospho-L-seryl-[protein] + ADP + H(+). It catalyses the reaction L-threonyl-[protein] + ATP = O-phospho-L-threonyl-[protein] + ADP + H(+). Functionally, CIPK serine-threonine protein kinases interact with CBL proteins. Binding of a CBL protein to the regulatory NAF domain of CIPK protein lead to the activation of the kinase in a calcium-dependent manner. In Arabidopsis thaliana (Mouse-ear cress), this protein is CBL-interacting serine/threonine-protein kinase 19 (CIPK19).